Consider the following 64-residue polypeptide: uncharacterized protein (64 aa).

This is an uncharacterized protein from Methanothermobacter thermautotrophicus (strain ATCC 29096 / DSM 1053 / JCM 10044 / NBRC 100330 / Delta H) (Methanobacterium thermoautotrophicum).